We begin with the raw amino-acid sequence, 149 residues long: uncharacterized protein (149 aa).

Residues 1 to 11 are compositionally biased toward basic and acidic residues; sequence MTKESKPDRLR. A disordered region spans residues 1-20; sequence MTKESKPDRLRQMGALNPKP.

This is an uncharacterized protein from Sinorhizobium fredii (strain NBRC 101917 / NGR234).